We begin with the raw amino-acid sequence, 402 residues long: Deoxyguanosinetriphosphate triphosphohydrolase-like protein (402 aa).

Residues 69–217 (RLTHSLEVAQ…AAIADDIAYD (149 aa)) form the HD domain.

This sequence belongs to the dGTPase family. Type 2 subfamily.

The sequence is that of Deoxyguanosinetriphosphate triphosphohydrolase-like protein from Bradyrhizobium diazoefficiens (strain JCM 10833 / BCRC 13528 / IAM 13628 / NBRC 14792 / USDA 110).